Here is a 239-residue protein sequence, read N- to C-terminus: MARTKKANDEVPTDSDSLKLKVAKQAAKLVKDEMVVGLGSGSTANLFIQELGKRIVEEELYIYGVPTSFDSRMVASTAGIPLISLDQCGEIDLAIDGADEVCKSTLALIKGGGGCHTMEKIVDYYAKEFIVLADEGKLVDSLGDKTPVPLEVIPFAYSTVLNKLLKLNTAPAIRSGSGKMGPVITDSGNMIIDVFMSIEDAEETEIMLNNIPGVLENGVFSKCDKVLVGTSKKVEILKK.

Substrate is bound by residues 40-43 (SGST), 96-99 (DGAD), and 110-113 (KGGG). E119 functions as the Proton acceptor in the catalytic mechanism. K137 is a binding site for substrate.

Belongs to the ribose 5-phosphate isomerase family. Homodimer.

The catalysed reaction is aldehydo-D-ribose 5-phosphate = D-ribulose 5-phosphate. Its pathway is carbohydrate degradation; pentose phosphate pathway; D-ribose 5-phosphate from D-ribulose 5-phosphate (non-oxidative stage): step 1/1. Functionally, catalyzes the reversible conversion of ribose-5-phosphate to ribulose 5-phosphate. The chain is Ribose-5-phosphate isomerase A from Methanococcus maripaludis (strain C7 / ATCC BAA-1331).